The following is a 135-amino-acid chain: Small ribosomal subunit protein uS12c (135 aa).

Belongs to the universal ribosomal protein uS12 family. Part of the 30S ribosomal subunit.

Its subcellular location is the plastid. The protein localises to the chloroplast. With S4 and S5 plays an important role in translational accuracy. Located at the interface of the 30S and 50S subunits. This Adiantum capillus-veneris (Maidenhair fern) protein is Small ribosomal subunit protein uS12c (rps12).